The following is a 130-amino-acid chain: MGRVRTKTVKRAARQIVEKYYGKLGLDFQYNKKVAEEVALIPSKRMRNKVAGFITHLMRRIQKGPVRGISLKLQEEERERRMDYIPEKSELEVPVIQVDQDTADMLNFLKISLPNLKVMSFNAHEHRERH.

The protein belongs to the eukaryotic ribosomal protein eS17 family.

The chain is Small ribosomal subunit protein eS17 (RPS17) from Theileria parva (East coast fever infection agent).